A 371-amino-acid polypeptide reads, in one-letter code: Lipoyl synthase, mitochondrial (371 aa).

The transit peptide at M1–T24 directs the protein to the mitochondrion. Over residues T20–Q29 the composition is skewed to polar residues. The interval T20–L42 is disordered. [4Fe-4S] cluster is bound by residues C107, C112, C118, C138, C142, C145, and S353. The region spanning G121–L342 is the Radical SAM core domain.

It belongs to the radical SAM superfamily. Lipoyl synthase family. [4Fe-4S] cluster serves as cofactor.

The protein resides in the mitochondrion. The enzyme catalyses [[Fe-S] cluster scaffold protein carrying a second [4Fe-4S](2+) cluster] + N(6)-octanoyl-L-lysyl-[protein] + 2 oxidized [2Fe-2S]-[ferredoxin] + 2 S-adenosyl-L-methionine + 4 H(+) = [[Fe-S] cluster scaffold protein] + N(6)-[(R)-dihydrolipoyl]-L-lysyl-[protein] + 4 Fe(3+) + 2 hydrogen sulfide + 2 5'-deoxyadenosine + 2 L-methionine + 2 reduced [2Fe-2S]-[ferredoxin]. It participates in protein modification; protein lipoylation via endogenous pathway; protein N(6)-(lipoyl)lysine from octanoyl-[acyl-carrier-protein]: step 2/2. Functionally, catalyzes the radical-mediated insertion of two sulfur atoms into the C-6 and C-8 positions of the octanoyl moiety bound to the lipoyl domains of lipoate-dependent enzymes, thereby converting the octanoylated domains into lipoylated derivatives. This is Lipoyl synthase, mitochondrial from Lachancea thermotolerans (strain ATCC 56472 / CBS 6340 / NRRL Y-8284) (Yeast).